Consider the following 311-residue polypeptide: tRNA-cytidine(32) 2-sulfurtransferase (311 aa).

Residues 47-52 (SGGKDS) carry the PP-loop motif motif. Positions 122, 125, and 213 each coordinate [4Fe-4S] cluster.

Belongs to the TtcA family. In terms of assembly, homodimer. Mg(2+) is required as a cofactor. Requires [4Fe-4S] cluster as cofactor.

It is found in the cytoplasm. The enzyme catalyses cytidine(32) in tRNA + S-sulfanyl-L-cysteinyl-[cysteine desulfurase] + AH2 + ATP = 2-thiocytidine(32) in tRNA + L-cysteinyl-[cysteine desulfurase] + A + AMP + diphosphate + H(+). It participates in tRNA modification. Catalyzes the ATP-dependent 2-thiolation of cytidine in position 32 of tRNA, to form 2-thiocytidine (s(2)C32). The sulfur atoms are provided by the cysteine/cysteine desulfurase (IscS) system. In Citrobacter koseri (strain ATCC BAA-895 / CDC 4225-83 / SGSC4696), this protein is tRNA-cytidine(32) 2-sulfurtransferase.